We begin with the raw amino-acid sequence, 938 residues long: Isoleucine--tRNA ligase (938 aa).

The short motif at 58–68 (PYANGSIHIGH) is the 'HIGH' region element. Glu-561 is a binding site for L-isoleucyl-5'-AMP. The 'KMSKS' region motif lies at 602–606 (KMSKS). Lys-605 contacts ATP. Zn(2+)-binding residues include Cys-901, Cys-904, Cys-921, and Cys-924.

It belongs to the class-I aminoacyl-tRNA synthetase family. IleS type 1 subfamily. Monomer. Requires Zn(2+) as cofactor.

It is found in the cytoplasm. It catalyses the reaction tRNA(Ile) + L-isoleucine + ATP = L-isoleucyl-tRNA(Ile) + AMP + diphosphate. Functionally, catalyzes the attachment of isoleucine to tRNA(Ile). As IleRS can inadvertently accommodate and process structurally similar amino acids such as valine, to avoid such errors it has two additional distinct tRNA(Ile)-dependent editing activities. One activity is designated as 'pretransfer' editing and involves the hydrolysis of activated Val-AMP. The other activity is designated 'posttransfer' editing and involves deacylation of mischarged Val-tRNA(Ile). This Klebsiella pneumoniae (strain 342) protein is Isoleucine--tRNA ligase.